Consider the following 257-residue polypeptide: Protein YIPF5 (257 aa).

The Cytoplasmic portion of the chain corresponds to M1–E124. The segment at P75 to K106 is interaction with Sec23. Residues T125–G145 form a helical membrane-spanning segment. A topological domain (lumenal) is located at residue K146. The helical transmembrane segment at I147–L167 threads the bilayer. Residues N168–T173 are Cytoplasmic-facing. A helical transmembrane segment spans residues G174 to L194. Over S195–S196 the chain is Lumenal. The chain crosses the membrane as a helical span at residues F197–G217. Residues W218–Q236 lie on the Cytoplasmic side of the membrane. A helical transmembrane segment spans residues Q237–F257.

Belongs to the YIP1 family. As to quaternary structure, interacts with the COPII coat components Sec23 (SEC23A and/or SEC23B) and Sec24 (SEC24A and/or SEC24B). Interacts with YIF1A. May interact with RAB1A. Interacts with YIPF3 and YIPF4. In terms of tissue distribution, ubiquitously expressed.

The protein localises to the golgi apparatus. Its subcellular location is the cis-Golgi network membrane. The protein resides in the cytoplasmic vesicle. It localises to the COPII-coated vesicle. It is found in the endoplasmic reticulum membrane. Functionally, plays a role in transport between endoplasmic reticulum and Golgi. In pancreatic beta cells, required to transport proinsulin from endoplasmic reticulum into the Golgi. The polypeptide is Protein YIPF5 (Mus musculus (Mouse)).